Here is a 478-residue protein sequence, read N- to C-terminus: Cytochrome c-552 (478 aa).

The signal sequence occupies residues 1–26 (MARKTLRARRFFSLIFPFFFITSVYA). Residue histidine 94 participates in heme c binding. Residues cysteine 122, cysteine 125, and lysine 126 each contribute to the heme site. Residues cysteine 160, cysteine 163, histidine 164, cysteine 209, cysteine 212, and histidine 213 each contribute to the heme c site. Ca(2+)-binding residues include glutamate 215, tyrosine 216, lysine 261, and glutamine 263. Residue tyrosine 216 participates in substrate binding. Histidine 264 contributes to the substrate binding site. 9 residues coordinate heme c: histidine 275, cysteine 282, cysteine 285, histidine 286, histidine 301, cysteine 314, cysteine 317, histidine 318, and histidine 393.

It belongs to the cytochrome c-552 family. Requires Ca(2+) as cofactor. It depends on heme c as a cofactor.

The protein resides in the periplasm. It carries out the reaction 6 Fe(III)-[cytochrome c] + NH4(+) + 2 H2O = 6 Fe(II)-[cytochrome c] + nitrite + 8 H(+). The protein operates within nitrogen metabolism; nitrate reduction (assimilation). Functionally, catalyzes the reduction of nitrite to ammonia, consuming six electrons in the process. The protein is Cytochrome c-552 of Salmonella paratyphi A (strain ATCC 9150 / SARB42).